A 464-amino-acid polypeptide reads, in one-letter code: Anthocyanidin 3-O-galactosyltransferase 3GT1 (464 aa).

S19 and H21 together coordinate an anthocyanidin. H21 serves as the catalytic Proton acceptor. N-linked (GlcNAc...) asparagine glycosylation is present at N38. The active-site Charge relay is D121. H152 provides a ligand contact to an anthocyanidin. UDP-alpha-D-glucose is bound by residues A342, Q344, H359, W362, N363, S364, and E367. G382 is a binding site for an anthocyanidin. D383 contacts UDP-alpha-D-glucose.

It belongs to the UDP-glycosyltransferase family. In terms of assembly, monomer. In terms of tissue distribution, mostly expressed in leaves and flowers and, to a lower extent, in roots. In flowers, mainly observed in petals, toruses and scapes, and at lower levels in pistils and stamens.

The catalysed reaction is cyanidin + UDP-alpha-D-galactose = cyanidin 3-O-beta-D-galactoside + UDP + H(+). It carries out the reaction cyanidin + UDP-alpha-D-glucose = cyanidin 3-O-beta-D-glucoside + UDP + H(+). It catalyses the reaction delphinidin + UDP-alpha-D-glucose = delphinidin 3-O-beta-D-glucoside + UDP. The enzyme catalyses malvidin + UDP-alpha-D-glucose = malvidin 3-O-beta-D-glucoside + UDP. The catalysed reaction is delphinidin + UDP-alpha-D-galactose = delphinidin 3-O-beta-D-galactoside + UDP + H(+). It carries out the reaction pelargonidin + UDP-alpha-D-galactose = pelargonidin 3-O-beta-D-galactoside betaine + UDP. It catalyses the reaction peonidin + UDP-alpha-D-galactose = peonidin 3-O-beta-D-galactoside + UDP. The enzyme catalyses malvidin + UDP-alpha-D-galactose = malvidin 3-O-beta-D-galactoside + UDP + H(+). The catalysed reaction is petunidin + UDP-alpha-D-galactose = petunidin 3-O-beta-D-galactoside + UDP. It carries out the reaction an anthocyanidin + UDP-alpha-D-glucose + H(+) = an anthocyanidin 3-O-beta-D-glucoside + UDP. It catalyses the reaction an anthocyanidin + UDP-alpha-D-galactose = an anthocyanidin 3-O-beta-D-galactoside + UDP. It participates in pigment biosynthesis; anthocyanin biosynthesis. Functionally, flavonoid 3-O-glycosyltransferase involved in the biosynthesis of anthocyanins conferring flower red/pink colors, mainly anthocyanidin 3-O-glycosides. Catalyzes the addition of UDP-sugar to the 3-OH of anthocyanidin, with a preference for UDP-galactose (UDP-Gal) as sugar donor and cyanidin as substrate; able to use delphinidin, pelargonidin, peonidin, malvidin and petunidin as substrates in the presence of UDP-Gal. Can also use UDP-glucose (UDP-Glu) as sugar donor with delphinidin, cyanidin and malvidin as substrates, but not active on pelargonidin, peonidin and petunidin. The polypeptide is Anthocyanidin 3-O-galactosyltransferase 3GT1 (Rhododendron delavayi (Rhododendron)).